A 739-amino-acid chain; its full sequence is Endoglucanase F (739 aa).

The signal sequence occupies residues 1 to 27 (MKKILAFLLTVALVAVVAIPQAVVSFA). Positions 28–470 (ADFNYGEALQ…AKMYEKYGGE (443 aa)) are catalytic. The active-site Nucleophile is D84. Active-site residues include H400, D438, and E447. Residues 480-639 (TPGEEFYVEA…NVRVWGKVPD (160 aa)) enclose the CBM3 domain. Positions 664-737 (PGIMLGDVNF…ILKLIEKFPA (74 aa)) constitute a Dockerin domain.

It belongs to the glycosyl hydrolase 9 (cellulase E) family. The cofactor is Ca(2+).

The enzyme catalyses Endohydrolysis of (1-&gt;4)-beta-D-glucosidic linkages in cellulose, lichenin and cereal beta-D-glucans.. Functionally, this enzyme catalyzes the endohydrolysis of 1,4-beta-glucosidic linkages in cellulose, lichenin and cereal beta-D-glucans. The chain is Endoglucanase F (celF) from Acetivibrio thermocellus (strain ATCC 27405 / DSM 1237 / JCM 9322 / NBRC 103400 / NCIMB 10682 / NRRL B-4536 / VPI 7372) (Clostridium thermocellum).